Here is a 522-residue protein sequence, read N- to C-terminus: Putative thymidine phosphorylase (522 aa).

This sequence belongs to the thymidine/pyrimidine-nucleoside phosphorylase family. Type 2 subfamily.

It carries out the reaction thymidine + phosphate = 2-deoxy-alpha-D-ribose 1-phosphate + thymine. The polypeptide is Putative thymidine phosphorylase (Albidiferax ferrireducens (strain ATCC BAA-621 / DSM 15236 / T118) (Rhodoferax ferrireducens)).